We begin with the raw amino-acid sequence, 860 residues long: Pentatricopeptide repeat-containing protein At2g40720 (860 aa).

PPR repeat units follow at residues 59 to 93 (SVFT…GWRY), 94 to 124 (DPFI…WSQS), 132 to 166 (DVTV…GVRP), 167 to 203 (DAFS…SLDT), 204 to 234 (DSFL…IEDK), 236 to 270 (NVVL…SVKL), 271 to 305 (VSTS…GLHN), 306 to 340 (DPYV…RLEI), 341 to 371 (WNAM…SVLP), 372 to 406 (DSFT…PIQS), 407 to 437 (TSTI…MEEK), 438 to 472 (DMVA…DDSL), 475 to 509 (DSDI…GLVL), 510 to 540 (NVFV…MSTE), 541 to 575 (NMVA…GIFP), 576 to 610 (DSVS…GIPS), 611 to 641 (DTHL…MQHK), 642 to 676 (SLIT…GESP), 677 to 707 (DDVT…MKQD), and 713 to 743 (NMEH…MPIE). Residues 748 to 823 (IWLCLLSASR…QPGCSWIEVS (76 aa)) are type E motif. The interval 824–854 (DRTNVFFSGGSSSPMKAEIFNVLNRLKSNMV) is type E(+) motif.

This sequence belongs to the PPR family. PCMP-E subfamily.

This is Pentatricopeptide repeat-containing protein At2g40720 (PCMP-E26) from Arabidopsis thaliana (Mouse-ear cress).